Consider the following 398-residue polypeptide: Argininosuccinate synthase (398 aa).

8 to 16 serves as a coordination point for ATP; that stretch reads AYSGGLDTT. Tyrosine 87 is a binding site for L-citrulline. Glycine 117 is an ATP binding site. The L-aspartate site is built by threonine 119, asparagine 123, and aspartate 124. Asparagine 123 contributes to the L-citrulline binding site. Positions 127, 175, 259, and 271 each coordinate L-citrulline.

It belongs to the argininosuccinate synthase family. Type 1 subfamily. Homotetramer.

It is found in the cytoplasm. The enzyme catalyses L-citrulline + L-aspartate + ATP = 2-(N(omega)-L-arginino)succinate + AMP + diphosphate + H(+). The protein operates within amino-acid biosynthesis; L-arginine biosynthesis; L-arginine from L-ornithine and carbamoyl phosphate: step 2/3. The chain is Argininosuccinate synthase from Corynebacterium jeikeium (strain K411).